Consider the following 131-residue polypeptide: Insulin-like 3 (131 aa).

A signal peptide spans 1-26 (MDPHPLTWALVLLGPALALSRAPAPA). Intrachain disulfides connect Cys-34–Cys-116, Cys-46–Cys-129, and Cys-115–Cys-120. The propeptide at 58–103 (AVAGGDRELLQWLEGQHLFHGLMASGDPMLVLAPQPPPQASGHHHH) is c peptide like.

This sequence belongs to the insulin family. Heterodimer of a B chain and an A chain linked by two disulfide bonds. In terms of tissue distribution, expressed exclusively in prenatal and postnatal Leydig cells.

It localises to the secreted. Functionally, seems to play a role in testicular function. May be a trophic hormone with a role in testicular descent in fetal life. Is a ligand for LGR8 receptor. This Sus scrofa (Pig) protein is Insulin-like 3 (INSL3).